The primary structure comprises 36 residues: Cytochrome b6-f complex subunit 5 (36 aa).

The helical transmembrane segment at 5–25 (LLSGIVLGLIPITILGLLMAA) threads the bilayer.

It belongs to the PetG family. As to quaternary structure, the 4 large subunits of the cytochrome b6-f complex are cytochrome b6, subunit IV (17 kDa polypeptide, PetD), cytochrome f and the Rieske protein, while the 4 small subunits are PetG, PetL, PetM and PetN. The complex functions as a dimer.

Its subcellular location is the plastid. It localises to the chloroplast thylakoid membrane. Functionally, component of the cytochrome b6-f complex, which mediates electron transfer between photosystem II (PSII) and photosystem I (PSI), cyclic electron flow around PSI, and state transitions. PetG is required for either the stability or assembly of the cytochrome b6-f complex. The protein is Cytochrome b6-f complex subunit 5 of Cyanidioschyzon merolae (strain NIES-3377 / 10D) (Unicellular red alga).